The primary structure comprises 116 residues: NADPH-dependent 7-cyano-7-deazaguanine reductase (116 aa).

C31 (thioimide intermediate) is an active-site residue. D38 functions as the Proton donor in the catalytic mechanism. Residues 53–55 and 72–73 each bind substrate; these read VEL and YE.

It belongs to the GTP cyclohydrolase I family. QueF type 1 subfamily.

It localises to the cytoplasm. The enzyme catalyses 7-aminomethyl-7-carbaguanine + 2 NADP(+) = 7-cyano-7-deazaguanine + 2 NADPH + 3 H(+). It functions in the pathway tRNA modification; tRNA-queuosine biosynthesis. Functionally, catalyzes the NADPH-dependent reduction of 7-cyano-7-deazaguanine (preQ0) to 7-aminomethyl-7-deazaguanine (preQ1). The sequence is that of NADPH-dependent 7-cyano-7-deazaguanine reductase from Chlorobium phaeobacteroides (strain DSM 266 / SMG 266 / 2430).